The following is a 108-amino-acid chain: Nucleoid-associated protein CHAB381_0200 (108 aa).

Belongs to the YbaB/EbfC family. As to quaternary structure, homodimer.

It is found in the cytoplasm. The protein localises to the nucleoid. Its function is as follows. Binds to DNA and alters its conformation. May be involved in regulation of gene expression, nucleoid organization and DNA protection. The sequence is that of Nucleoid-associated protein CHAB381_0200 from Campylobacter hominis (strain ATCC BAA-381 / DSM 21671 / CCUG 45161 / LMG 19568 / NCTC 13146 / CH001A).